The sequence spans 394 residues: Protein TsgA homolog (394 aa).

Helical transmembrane passes span 11 to 31 (WISF…GMVM), 51 to 71 (FLNT…EIIP), 76 to 96 (LVFG…GHNL), 101 to 121 (ACMF…TFLI), 134 to 154 (LLFT…IAAT), 160 to 180 (VAWY…FILT), 206 to 226 (IGVL…LGFI), 246 to 266 (GLVS…SVAL), 274 to 294 (IVTV…SSQQ), 297 to 317 (MLSM…TTLI), 334 to 354 (FILT…GPIV), and 363 to 383 (LATA…LGFV).

The protein belongs to the major facilitator superfamily. TsgA family.

It is found in the cell inner membrane. This chain is Protein TsgA homolog, found in Edwardsiella ictaluri (strain 93-146).